Here is a 178-residue protein sequence, read N- to C-terminus: uncharacterized protein (178 aa).

In terms of domain architecture, N-acetyltransferase spans 9–173; it reads LTLRKMELED…IDVYMFSLLK (165 aa).

This is an uncharacterized protein from Bacillus licheniformis.